Here is a 268-residue protein sequence, read N- to C-terminus: M1-specific T cell receptor alpha chain (268 aa).

Residues 1–19 (MVLKFSVSILWIQLAWVST) form the signal peptide. The Ig-like V-type domain occupies 20–107 (QLLEQSPQFL…QPGDTGLYLC (88 aa)). Residues 20 to 109 (QLLEQSPQFL…GDTGLYLCAG (90 aa)) are t cell receptor alpha variable 27. 2 N-linked (GlcNAc...) asparagine glycosylation sites follow: Asn-36 and Asn-42. Residues Cys-41 and Cys-107 are joined by a disulfide bond. The CDR1 stretch occupies residues 45–49 (SVFSS). The tract at residues 67 to 69 (VVT) is CDR2. Residues 107–118 (CAGGGSQGNLIF) form a CDR3 region. Residues 110-128 (GGSQGNLIFGKGTKLSVKP) are t cell receptor alpha joining 42. The interval 129-268 (IQNPDPAVYQ…LLMTLRLWSS (140 aa)) is t cell receptor alpha constant. The region spanning 147 to 235 (KSVCLFTDFD…LVEKSFETDT (89 aa)) is the Ig-like C1-type domain. A disulfide bridge connects residues Cys-150 and Cys-200. N-linked (GlcNAc...) asparagine glycosylation is found at Asn-160, Asn-194, Asn-205, and Asn-241. The segment at 222-243 (CDVKLVEKSFETDTNLNFQNLS) is connecting peptide. A helical membrane pass occupies residues 244 to 266 (VIGFRILLLKVAGFNLLMTLRLW). At 267–268 (SS) the chain is on the cytoplasmic side.

As to quaternary structure, disulfide-linked heterodimer with TRBV19*01J2S7*01C*02 beta chain. The TR primarily interacts via its CDR3-beta domain with M/matrix protein 1-derived peptide (GILGFVFTL) displayed by HLA-A*02.01 in a 'peg-notch' recognition mode. The alpha-beta TR associates with the transmembrane signaling CD3 coreceptor proteins to form the TR-CD3 (TCR). The assembly of alpha-beta TR heterodimers with CD3 occurs in the endoplasmic reticulum where a single alpha-beta TR heterodimer associates with one CD3D-CD3E heterodimer, one CD3G-CD3E heterodimer and one CD247 homodimer forming a stable octameric structure. CD3D-CD3E and CD3G-CD3E heterodimers preferentially associate with TR alpha and TR beta chains (via TM domain), respectively. The association of the CD247 homodimer is the last step of TCR assembly in the endoplasmic reticulum and is required for transport to the cell surface. In terms of tissue distribution, expressed in M/matrix protein 1-specific effector and memory CD8-positive T cells readily detectable in the peripheral blood, secondary lymphoid organs and lung (primary site of infection) of IAV infected individuals.

Its subcellular location is the cell membrane. The alpha chain of TRAV27*01J42*01C*01/TRBV19*01J2S7*01C*02 alpha-beta T cell receptor (TR) clonotype that is specific for HLA-A*02:01-restricted M/matrix protein 1 immunodominant epitope GILGFVFTL of influenza A virus (IAV). Classified as a public TR clonotype, it is preferentially selected in effector memory CD8-positive T cells among multiple HLA-A*02:01 carriers and confers long-lived immunity against IAV infection. Can cross-recognize sporadically emerging IAV variants by molecular mimicry, inducing immunity toward different influenza strains. Antigen recognition initiates TR-CD3 clustering on the cell surface and intracellular activation of LCK that phosphorylates the ITAM motifs of CD3G, CD3D, CD3E and CD247 enabling the recruitment of ZAP70. In turn, ZAP70 phosphorylates LAT, which recruits numerous signaling molecules to form the LAT signalosome. The LAT signalosome propagates signal branching to three major signaling pathways, the calcium, the mitogen-activated protein kinase (MAPK) kinase and the nuclear factor NF-kappa-B (NF-kB) pathways, leading to the mobilization of transcription factors that are critical for gene expression and essential for T cell differentiation into effector/memory T cells. In Homo sapiens (Human), this protein is M1-specific T cell receptor alpha chain.